The sequence spans 70 residues: DNA-directed RNA polymerase subunit omega (70 aa).

Belongs to the RNA polymerase subunit omega family. In terms of assembly, the RNAP catalytic core consists of 2 alpha, 1 beta, 1 beta' and 1 omega subunit. When a sigma factor is associated with the core the holoenzyme is formed, which can initiate transcription.

It carries out the reaction RNA(n) + a ribonucleoside 5'-triphosphate = RNA(n+1) + diphosphate. In terms of biological role, promotes RNA polymerase assembly. Latches the N- and C-terminal regions of the beta' subunit thereby facilitating its interaction with the beta and alpha subunits. This chain is DNA-directed RNA polymerase subunit omega, found in Clostridium perfringens (strain ATCC 13124 / DSM 756 / JCM 1290 / NCIMB 6125 / NCTC 8237 / Type A).